A 446-amino-acid polypeptide reads, in one-letter code: Coagulation factor VII (446 aa).

Residues 1–24 (MVPQAHGLLLLCFLLQLQGPLGTA) form the signal peptide. Positions 25–41 (VFITQEEAHGVLHRQRR) are excised as a propeptide. Residues 42–86 (ANSLLEELWPGSLERECNEEQCSFEEAREIFKSPERTKQFWIVYS) enclose the Gla domain. 4-carboxyglutamate occurs at positions 47, 48, 55, 57, 60, 61, 66, 67, 70, and 76. A disulfide bridge links Cys-58 with Cys-63. The region spanning 87–123 (DGDQCASNPCQNGGTCQDHLKSYVCFCLLDFEGRNCE) is the EGF-like 1; calcium-binding domain. Cystine bridges form between Cys-91-Cys-102, Cys-96-Cys-111, Cys-113-Cys-122, Cys-132-Cys-143, Cys-139-Cys-153, Cys-155-Cys-168, Cys-176-Cys-303, Cys-200-Cys-205, Cys-219-Cys-235, and Cys-351-Cys-370. O-linked (Glc...) serine; alternate glycosylation is present at Ser-93. An O-linked (Xyl...) serine; alternate glycan is attached at Ser-93. Position 104 is a (3R)-3-hydroxyaspartate (Asp-104). The EGF-like 2 domain maps to 128 to 169 (EQLICANENGDCDQYCRDHVGTKRTCSCHEDYTLQPDEVSCK). Asn-186 is a glycosylation site (N-linked (GlcNAc...) asparagine). The Peptidase S1 domain maps to 194 to 433 (IVGGNVCPKG…YIDWLVRHMD (240 aa)). The active-site Charge relay system is the His-234. Asn-244 is a glycosylation site (N-linked (GlcNAc...) asparagine). Asp-283 (charge relay system) is an active-site residue. Asp-379 is a binding site for substrate. The cysteines at positions 381 and 409 are disulfide-linked. Ser-385 serves as the catalytic Charge relay system.

This sequence belongs to the peptidase S1 family. In terms of assembly, heterodimer of a light chain and a heavy chain linked by a disulfide bond. Post-translationally, the vitamin K-dependent, enzymatic carboxylation of some glutamate residues allows the modified protein to bind calcium. In terms of processing, the iron and 2-oxoglutarate dependent 3-hydroxylation of aspartate and asparagine is (R) stereospecific within EGF domains. Can be either O-glucosylated or O-xylosylated at Ser-93 by POGLUT1. Plasma and liver.

The protein resides in the secreted. The catalysed reaction is Selective cleavage of Arg-|-Ile bond in factor X to form factor Xa.. Its function is as follows. Initiates the extrinsic pathway of blood coagulation. Serine protease that circulates in the blood in a zymogen form. Factor VII is converted to factor VIIa by factor Xa, factor XIIa, factor IXa, or thrombin by minor proteolysis. In the presence of tissue factor and calcium ions, factor VIIa then converts factor X to factor Xa by limited proteolysis. Factor VIIa also converts factor IX to factor IXa in the presence of tissue factor and calcium. This is Coagulation factor VII (F7) from Mus musculus (Mouse).